Consider the following 864-residue polypeptide: Mitochondrial 15S rRNA processing factor CCM1 (864 aa).

Residues 1 to 76 (MYMARCGPKN…REFSNTLKER (76 aa)) constitute a mitochondrion transit peptide. Composition is skewed to polar residues over residues 80-94 (TKSVNSDGHQSNSIA) and 102-112 (NVNVTKTSSVP). The tract at residues 80 to 117 (TKSVNSDGHQSNSIAPISEDSRNVNVTKTSSVPNEEKS) is disordered. PPR repeat units follow at residues 319–353 (NKQNLTTVIQFYSRKEMTKQAWNTFDTMKFLSTKH) and 356–390 (DICTYNTMLRICEKERNFPKALDLFQEIQDHNIKP).

It belongs to the CCM1 family. As to quaternary structure, binds to mitochondrial small subunit 15S rRNA.

Its subcellular location is the mitochondrion. Regulates mitochondrial small subunit maturation by controlling 15S rRNA 5'-end processing. Localizes to the 5' precursor of the 15S rRNA in a position that is subsequently occupied by mS47 in the mature yeast mtSSU. Uses structure and sequence-specific RNA recognition, binding to a single-stranded region of the precursor and specifically recognizing bases -6 to -1. The exchange of Ccm1 for mS47 is coupled to the irreversible removal of precursor rRNA that is accompanied by conformational changes of the mitoribosomal proteins uS5m and mS26. These conformational changes signal completion of 5'-end rRNA processing through protection of the mature 5'-end of the 15S rRNA and stabilization of mS47. The removal of the 5' precursor together with the dissociation of Ccm1 may be catalyzed by the 5'-3' exoribonuclease Pet127. Involved in the specific removal of group I introns in mitochondrial encoded transcripts. In Saccharomyces cerevisiae (strain ATCC 204508 / S288c) (Baker's yeast), this protein is Mitochondrial 15S rRNA processing factor CCM1.